The following is a 323-amino-acid chain: CTD kinase subunit beta (323 aa).

It belongs to the cyclin family. In terms of assembly, CTDK-I consists of three subunits, CTK1, CTK2 and CTK3 (also called alpha, beta and gamma). Interacts with CTK1. Heterodimerization with CTK3 is required to protect this subunit from degradation. Post-translationally, phosphorylated. Ubiquitinated. Phosphorylation and ubiquitination lead to degradation in growth-related way by the ubiquitin-proteasome pathway. Neither phosphorylation nor degradation requires association with CTK1.

The protein localises to the nucleus. It is found in the nucleolus. In terms of biological role, cyclin subunit of the CTDK-I complex, which hyperphosphorylates the C-terminal heptapeptide repeat domain (CTD) of the largest RNA polymerase II subunit. CTDK-I phosphorylates 'Ser-5' if the CTD substrate is not phosphorylated at 'Ser-5', but will phosphorylate 'Ser-2' of a CTD substrate if 'Ser-5' is already phosphorylated. CTDK-I is also more reactive toward substrates that are prephosphorylated at 'Ser-2' or 'Ser-5' compared with an unphosphorylated CTD substrate, therefore efficiently creating doubly phosphorylated CTD repeats. Involved in RNA polymerase II transcriptional elongation, and as part of the CTDK-I complex, pre-mRNA 3'-end processing and SET2 mediated H3K36 methylation. Together with CTK3, required for CTK1 CTD kinase activation. Required for DNA damage induced transcription. Involved in the adaptation to alternative carbon sources, including galactose, glycerol and ethanol, but not raffinose. Required for the integrity of the rDNA locus. The sequence is that of CTD kinase subunit beta (CTK2) from Saccharomyces cerevisiae (strain ATCC 204508 / S288c) (Baker's yeast).